We begin with the raw amino-acid sequence, 433 residues long: Cell division protein FtsZ homolog 1, chloroplastic (433 aa).

Residues 1 to 66 constitute a chloroplast transit peptide; sequence MAIIPLAQLN…TRSKSMRLRC (66 aa). Residue Ser67 is modified to N-acetylserine. Residues 83 to 87, 170 to 172, Glu201, Arg205, and Asp249 each bind GTP; these read GGGNN and GTG. Residues 399 to 433 are disordered; it reads GSSGQQENKGMSLPHQKQSPSTISTKSSSPRRLFF. Low complexity predominate over residues 414–433; sequence QKQSPSTISTKSSSPRRLFF.

It belongs to the FtsZ family. In terms of assembly, aggregates to form a contractile ring-like structure; contraction of the ring was accompanied by an increase in the filament turnover rate. This aggregation is regulated in midchloroplast stroma by MIND1 (repressor) and MINE1 (promoter). Self-interacts and binds to FTSZ2-1 in heteromers to form two morphologically distinct types of filaments, termed type-I (smooth filaments) and type-II (rough filaments), in a GTP-dependent manner. Interacts with ARC3. Part of a complex made of ARC3, ARC6, FTSZ1 and FTSZ2. In terms of tissue distribution, in pollen grain, restricted to plastids of vegetative cells. Also present in pollen tubes plastids.

It is found in the plastid. The protein localises to the chloroplast stroma. It localises to the chloroplast thylakoid membrane. Functionally, exhibits GTPase activity. Component of the plastid division machinery that forms a contractile ring at the division site. Required for plastid division in a dose-dependent manner. Involved in epidermal plastids division in a MINE1-dependent manner. Involved in blue light-induced chloroplast movements. May regulate thylakoid development. In the vegetative shoot apex, at the shoot apical meristem (SAM), where the proplastid-to-chloroplast transition takes place, contributes equally with FTSZ2-1 in the L2 layer to plastid division. This is Cell division protein FtsZ homolog 1, chloroplastic from Arabidopsis thaliana (Mouse-ear cress).